Consider the following 168-residue polypeptide: Small ribosomal subunit protein uS9 (168 aa).

Residues 1–29 are compositionally biased toward low complexity; the sequence is MAQNEELTAEAVEAEETLTSYTSESTSAE. The tract at residues 1–36 is disordered; sequence MAQNEELTAEAVEAEETLTSYTSESTSAEDAPKKER.

This sequence belongs to the universal ribosomal protein uS9 family.

This is Small ribosomal subunit protein uS9 from Paenarthrobacter aurescens (strain TC1).